Here is a 309-residue protein sequence, read N- to C-terminus: Ribosomal RNA small subunit methyltransferase H (309 aa).

Residues 36–38 (GGH), aspartate 56, phenylalanine 82, aspartate 103, and glutamine 110 contribute to the S-adenosyl-L-methionine site.

The protein belongs to the methyltransferase superfamily. RsmH family.

The protein resides in the cytoplasm. The enzyme catalyses cytidine(1402) in 16S rRNA + S-adenosyl-L-methionine = N(4)-methylcytidine(1402) in 16S rRNA + S-adenosyl-L-homocysteine + H(+). Its function is as follows. Specifically methylates the N4 position of cytidine in position 1402 (C1402) of 16S rRNA. This is Ribosomal RNA small subunit methyltransferase H from Hahella chejuensis (strain KCTC 2396).